A 625-amino-acid polypeptide reads, in one-letter code: Clathrin interactor 1 (625 aa).

The 134-residue stretch at 16 to 149 (NVVMNYSEIE…QDDDRLREER (134 aa)) folds into the ENTH domain. Position 29 (Arg29) interacts with a 1,2-diacyl-sn-glycero-3-phospho-(1D-myo-inositol-4,5-bisphosphate). An interaction with VTI1B region spans residues 52–54 (FMY). Arg67 serves as a coordination point for a 1,2-diacyl-sn-glycero-3-phospho-(1D-myo-inositol-4,5-bisphosphate). 2 interaction with VTI1B regions span residues 94–96 (SER) and 142–153 (DDRLREERKKAK). Ser163, Ser166, Ser173, Ser205, Ser210, Ser227, Ser245, and Ser299 each carry phosphoserine. A disordered region spans residues 219–331 (FRRKDREDSP…SSGDLVDLFD (113 aa)). Residues 222–239 (KDREDSPERCSDSDEEKK) are compositionally biased toward basic and acidic residues. Thr308 bears the Phosphothreonine mark. Residues 308–323 (TPQSSVKTSVPSSKSS) show a composition bias toward low complexity. At Ser312 the chain carries Phosphoserine. Residues 340 to 352 (SADLFGGFADFGS) form an interaction with AP1G1, AP1G2 and GGA2 region. The segment at 368–380 (GNGDFGDWSAFNQ) is interaction with AP1G1 and AP1G2. A Phosphoserine modification is found at Ser624.

Belongs to the epsin family. As to quaternary structure, binds clathrin heavy chain and AP-2. Interacts with VTI1B. Interacts with GGA2 (via GAE domain). Interacts with AP1G1 (via GAE domain). Interacts with AP1G2 (via GAE domain). As to expression, ubiquitously expressed at low to intermediate levels.

Its subcellular location is the cytoplasm. The protein localises to the perinuclear region. It is found in the membrane. The protein resides in the cytoplasmic vesicle. It localises to the clathrin-coated vesicle. In terms of biological role, binds to membranes enriched in phosphatidylinositol 4,5-bisphosphate (PtdIns(4,5)P2). May have a role in transport via clathrin-coated vesicles from the trans-Golgi network to endosomes. Stimulates clathrin assembly. This is Clathrin interactor 1 (CLINT1) from Homo sapiens (Human).